We begin with the raw amino-acid sequence, 410 residues long: Histidine--tRNA ligase (410 aa).

It belongs to the class-II aminoacyl-tRNA synthetase family.

The protein resides in the cytoplasm. The catalysed reaction is tRNA(His) + L-histidine + ATP = L-histidyl-tRNA(His) + AMP + diphosphate + H(+). The chain is Histidine--tRNA ligase from Methanocorpusculum labreanum (strain ATCC 43576 / DSM 4855 / Z).